Consider the following 310-residue polypeptide: Methionyl-tRNA formyltransferase (310 aa).

110–113 (SLLP) serves as a coordination point for (6S)-5,6,7,8-tetrahydrofolate.

It belongs to the Fmt family.

The enzyme catalyses L-methionyl-tRNA(fMet) + (6R)-10-formyltetrahydrofolate = N-formyl-L-methionyl-tRNA(fMet) + (6S)-5,6,7,8-tetrahydrofolate + H(+). Its function is as follows. Attaches a formyl group to the free amino group of methionyl-tRNA(fMet). The formyl group appears to play a dual role in the initiator identity of N-formylmethionyl-tRNA by promoting its recognition by IF2 and preventing the misappropriation of this tRNA by the elongation apparatus. This chain is Methionyl-tRNA formyltransferase, found in Halorhodospira halophila (strain DSM 244 / SL1) (Ectothiorhodospira halophila (strain DSM 244 / SL1)).